We begin with the raw amino-acid sequence, 368 residues long: Nicotinate-nucleotide--dimethylbenzimidazole phosphoribosyltransferase (368 aa).

Residue glutamate 314 is the Proton acceptor of the active site. A disordered region spans residues 344 to 368 (DRADGADNSADSGASAGTVASDPTV). A compositionally biased stretch (low complexity) spans 349–360 (ADNSADSGASAG).

Belongs to the CobT family.

The enzyme catalyses 5,6-dimethylbenzimidazole + nicotinate beta-D-ribonucleotide = alpha-ribazole 5'-phosphate + nicotinate + H(+). The protein operates within nucleoside biosynthesis; alpha-ribazole biosynthesis; alpha-ribazole from 5,6-dimethylbenzimidazole: step 1/2. Functionally, catalyzes the synthesis of alpha-ribazole-5'-phosphate from nicotinate mononucleotide (NAMN) and 5,6-dimethylbenzimidazole (DMB). This is Nicotinate-nucleotide--dimethylbenzimidazole phosphoribosyltransferase from Corynebacterium efficiens (strain DSM 44549 / YS-314 / AJ 12310 / JCM 11189 / NBRC 100395).